The primary structure comprises 557 residues: MSSYSYDPYYTSYKRRVVESSPRVHIRSSYVSPSRTTYSPVVSSTMRRSYAASSSSSSSLLHGVDTMDLSQVAAISSDLKIVRTQEKAQLQDLNDRFANFIERVHELEQRNKVLEAELLLLRQKHNEPSRLRDLYEQEVRELRLAQEEATGDRQTMRNERERLEDALRLLQGRYEEEALSREDAEARLLDVRKEADMAALARVELEKRMDSLLDEIAFLKKVHEEELAQLQSQVQYAQISLEVEVAKPDLSSALRDIRAQYEKLAAKNMQSAEDWFKSRFTVLTQSAARNTDAVRAAKDEVSESRRMLSAKGLEIEACRGVNDALERQIQELEEKQSGEIAGMQDAINKLEEELRNTKSEMARYLKEYQDLLNVKMALDIEIAAYRKLLEGEETRLSFSGVGAITSGYTQSAPVFGRSAYSLQSSSYMTSRAFPTYYSSHVQEEQLDIEETIESSRAEEAKAEAPEEEEEEAGEEEAEGGEGDEGEGEEGEEAKEEEAEEEGEGEEKEEEEEGEGEAEGEAEGEGEAEGEGEEEEEGKGEEPAEEESKKKKKKKKKK.

Ser-2 carries the N-acetylserine modification. The segment at 2–89 (SSYSYDPYYT…KIVRTQEKAQ (88 aa)) is head. Residues 86-396 (EKAQLQDLND…KLLEGEETRL (311 aa)) enclose the IF rod domain. Residues 90–121 (LQDLNDRFANFIERVHELEQRNKVLEAELLLL) are coil 1A. The segment at 122–134 (RQKHNEPSRLRDL) is linker 1. Residues 135-230 (YEQEVRELRL…KVHEEELAQL (96 aa)) form a coil 1B region. Residues 231 to 248 (QSQVQYAQISLEVEVAKP) are linker 12. The interval 249 to 267 (DLSSALRDIRAQYEKLAAK) is coil 2A. Residues 268–276 (NMQSAEDWF) form a linker 2 region. The tract at residues 277 to 392 (KSRFTVLTQS…AAYRKLLEGE (116 aa)) is coil 2B. The tail, subdomain A stretch occupies residues 393–437 (ETRLSFSGVGAITSGYTQSAPVFGRSAYSLQSSSYMTSRAFPTYY). The segment at 393–557 (ETRLSFSGVG…KKKKKKKKKK (165 aa)) is tail. The segment at 438-557 (SSHVQEEQLD…KKKKKKKKKK (120 aa)) is tail, subdomain B (acidic). The interval 452–557 (IESSRAEEAK…KKKKKKKKKK (106 aa)) is disordered. Residues 453 to 464 (ESSRAEEAKAEA) show a composition bias toward basic and acidic residues. Residues 465–538 (PEEEEEEAGE…GEGEEEEEGK (74 aa)) show a composition bias toward acidic residues. A compositionally biased stretch (basic and acidic residues) spans 539–548 (GEEPAEEESK).

The protein belongs to the intermediate filament family. In terms of assembly, forms homodimers (in vitro).

Its subcellular location is the cell projection. It is found in the axon. The protein resides in the cytoplasm. The protein localises to the cytoskeleton. Its function is as follows. Neurofilaments usually contain three intermediate filament proteins: NEFL, NEFM, and NEFH which are involved in the maintenance of neuronal caliber. May additionally cooperate with other neuronal intermediate filament proteins to form neuronal filamentous networks. The polypeptide is Neurofilament light polypeptide (nefl) (Xenopus tropicalis (Western clawed frog)).